A 451-amino-acid chain; its full sequence is Phosphoglucosamine mutase (451 aa).

Catalysis depends on S103, which acts as the Phosphoserine intermediate. Mg(2+) is bound by residues S103, D243, D245, and D247. Position 103 is a phosphoserine (S103).

The protein belongs to the phosphohexose mutase family. It depends on Mg(2+) as a cofactor. Activated by phosphorylation.

The catalysed reaction is alpha-D-glucosamine 1-phosphate = D-glucosamine 6-phosphate. Catalyzes the conversion of glucosamine-6-phosphate to glucosamine-1-phosphate. This is Phosphoglucosamine mutase from Lactobacillus gasseri (strain ATCC 33323 / DSM 20243 / BCRC 14619 / CIP 102991 / JCM 1131 / KCTC 3163 / NCIMB 11718 / NCTC 13722 / AM63).